Reading from the N-terminus, the 251-residue chain is Glucosamine-6-phosphate deaminase (251 aa).

Residue aspartate 67 is the Proton acceptor; for enolization step of the active site. Asparagine 136 serves as the catalytic For ring-opening step. Catalysis depends on histidine 138, which acts as the Proton acceptor; for ring-opening step. Glutamate 143 functions as the For ring-opening step in the catalytic mechanism.

It belongs to the glucosamine/galactosamine-6-phosphate isomerase family. NagB subfamily.

It catalyses the reaction alpha-D-glucosamine 6-phosphate + H2O = beta-D-fructose 6-phosphate + NH4(+). The protein operates within amino-sugar metabolism; N-acetylneuraminate degradation; D-fructose 6-phosphate from N-acetylneuraminate: step 5/5. Its function is as follows. Catalyzes the reversible isomerization-deamination of glucosamine 6-phosphate (GlcN6P) to form fructose 6-phosphate (Fru6P) and ammonium ion. The chain is Glucosamine-6-phosphate deaminase from Geobacillus sp. (strain WCH70).